The sequence spans 552 residues: Leiomodin-2 (552 aa).

Residues 1 to 47 are interaction with tropomyosin alpha; it reads MSTFGYRRELSKYEDIDEDELLASLTEEELKELERELEDIEPDRNLP. Interaction with actin stretches follow at residues 1 to 169 and 170 to 498; these read MSTF…SSHV and RHKK…KEIK. Residues 13 to 46 adopt a coiled-coil conformation; sequence YEDIDEDELLASLTEEELKELERELEDIEPDRNL. Disordered regions lie at residues 33–67, 87–191, and 364–531; these read LERE…FSRE, GACE…DGKD, and MDKQ…DNLM. Positions 51 to 64 are enriched in polar residues; sequence RQKSLTEKTPTGTF. The stretch at 86–151 forms a coiled coil; sequence LGACEKDSEQ…DDEDEEKQNS (66 aa). Composition is skewed to acidic residues over residues 93-108 and 115-147; these read SEQE…EECF and VSEE…EDEE. Residues 364–377 are compositionally biased toward basic and acidic residues; it reads MDKQRQKRMQEQRQ. Over residues 398 to 415 the composition is skewed to low complexity; it reads PRSSPYTSPKSSPWSSPK. Over residues 425-450 the composition is skewed to pro residues; sequence SQPPAPAPPPPPPPPPPPPPPPPPVI. Over residues 478-488 the composition is skewed to basic residues; it reads QKKKKGKKGKK. Over residues 489-513 the composition is skewed to basic and acidic residues; it reads HENSILKEIKDSLKSVSDRKSEEGS. The span at 514–524 shows a compositional bias: polar residues; the sequence is RPSTRPSTPQR. The interval 526–545 is interaction with actin 3; that stretch reads LHDNLMEAIRASSIKQLRRV. The WH2 domain maps to 526–545; the sequence is LHDNLMEAIRASSIKQLRRV.

It belongs to the tropomodulin family. As to quaternary structure, can bind at least three actin monomers and thereby provides a nucleus for actin filament formation. Interacts (via N-terminus) with tropomyosin alpha (TPM1) (via N-terminus). May also interact with TPM2 (via N-terminus).

Its subcellular location is the cytoplasm. The protein resides in the myofibril. It is found in the sarcomere. It localises to the m line. The protein localises to the cytoskeleton. Mediates nucleation of actin filaments and thereby promotes actin polymerization. Plays a role in the regulation of actin filament length. Required for normal sarcomere organization in the heart, and for normal heart function. The chain is Leiomodin-2 (LMOD2) from Gallus gallus (Chicken).